The following is a 203-amino-acid chain: A-type ATP synthase subunit E (203 aa).

The protein belongs to the V-ATPase E subunit family. Has multiple subunits with at least A(3), B(3), C, D, E, F, H, I and proteolipid K(x).

Its subcellular location is the cell membrane. Its function is as follows. Component of the A-type ATP synthase that produces ATP from ADP in the presence of a proton gradient across the membrane. In Thermococcus kodakarensis (strain ATCC BAA-918 / JCM 12380 / KOD1) (Pyrococcus kodakaraensis (strain KOD1)), this protein is A-type ATP synthase subunit E.